The primary structure comprises 214 residues: Ribosomal RNA large subunit methyltransferase E (214 aa).

S-adenosyl-L-methionine contacts are provided by Gly60, Trp62, Asp86, Asp102, and Asp127. Lys167 acts as the Proton acceptor in catalysis.

The protein belongs to the class I-like SAM-binding methyltransferase superfamily. RNA methyltransferase RlmE family.

Its subcellular location is the cytoplasm. The catalysed reaction is uridine(2552) in 23S rRNA + S-adenosyl-L-methionine = 2'-O-methyluridine(2552) in 23S rRNA + S-adenosyl-L-homocysteine + H(+). Functionally, specifically methylates the uridine in position 2552 of 23S rRNA at the 2'-O position of the ribose in the fully assembled 50S ribosomal subunit. The polypeptide is Ribosomal RNA large subunit methyltransferase E (Janthinobacterium sp. (strain Marseille) (Minibacterium massiliensis)).